The chain runs to 309 residues: Probable manganese-dependent inorganic pyrophosphatase (309 aa).

Mn(2+) contacts are provided by histidine 9, aspartate 13, aspartate 15, aspartate 75, histidine 97, and aspartate 149.

Belongs to the PPase class C family. Requires Mn(2+) as cofactor.

It localises to the cytoplasm. It catalyses the reaction diphosphate + H2O = 2 phosphate + H(+). The protein is Probable manganese-dependent inorganic pyrophosphatase of Bacillus cereus (strain ATCC 10987 / NRS 248).